The chain runs to 1902 residues: PI-type proteinase (1902 aa).

The signal sequence occupies residues 1–33; it reads MQRKKKGLSILLAGTVALGALAVLPVGEIQAKA. A propeptide spanning residues 34-187 is cleaved from the precursor; the sequence is AISQQTKGSS…VTLAKVYYPT (154 aa). Residues 191 to 697 form the Peptidase S8 domain; it reads ANSMANVQAV…AGLVDVKAAI (507 aa). Active-site charge relay system residues include Asp-217, His-281, and Ser-620. A disordered region spans residues 1796–1874; the sequence is GKGDGTTGTS…GALPKTGETT (79 aa). The span at 1797–1812 shows a compositional bias: gly residues; the sequence is KGDGTTGTSDKGGGQG. Residues 1830-1843 are compositionally biased toward polar residues; that stretch reads SQPSSGGNIPTNPA. An LPXTG sorting signal motif is present at residues 1867–1871; that stretch reads LPKTG. Thr-1870 bears the Pentaglycyl murein peptidoglycan amidated threonine mark. Residues 1871-1902 constitute a propeptide, removed by sortase; it reads GETTERPAFGFLGVIVVILMGVLGLKRKQREE.

Belongs to the peptidase S8 family.

It localises to the secreted. It is found in the cell wall. The enzyme catalyses Endopeptidase activity with very broad specificity, although some subsite preference have been noted, e.g. large hydrophobic residues in the P1 and P4 positions, and Pro in the P2 position. Best known for its action on caseins, although it has been shown to hydrolyze hemoglobin and oxidized insulin B-chain.. Its function is as follows. Protease which breaks down milk proteins during the growth of the bacteria on milk. The polypeptide is PI-type proteinase (prtP) (Lactococcus lactis subsp. cremoris (Streptococcus cremoris)).